Here is a 211-residue protein sequence, read N- to C-terminus: Endonuclease YncB (211 aa).

The signal sequence occupies residues 1 to 19; that stretch reads MKKILISMIAIVLSITLAA. Cysteine 20 carries the N-palmitoyl cysteine lipid modification. The S-diacylglycerol cysteine moiety is linked to residue cysteine 20. Residues 24 to 63 form a disordered region; it reads HAAKNHSDSNGTEQVSQDTHSNEYNQTEQKAGTPHSKNQK. Over residues 31 to 53 the composition is skewed to polar residues; it reads DSNGTEQVSQDTHSNEYNQTEQK. The TNase-like domain occupies 64 to 197; the sequence is KLVNVTLDRA…KSDKLSIWSK (134 aa). Ca(2+) is bound at residue aspartate 77. Arginine 91 is an active-site residue. 2 residues coordinate Ca(2+): aspartate 96 and threonine 97. Active-site residues include glutamate 99 and arginine 142.

The protein belongs to the thermonuclease family. Requires Ca(2+) as cofactor.

The protein resides in the cell membrane. Inhibited by aurintricalboxylic acid but not by Zn(2+). Functionally, shows DNase activity on double strand DNA. This Bacillus subtilis (strain 168) protein is Endonuclease YncB (yncB).